The following is a 315-amino-acid chain: Polyprenyl transferase mpaA (315 aa).

The next 8 helical transmembrane spans lie at 40 to 60 (IEFI…LCGA), 84 to 103 (LASG…GQYF), 118 to 135 (IWSL…YPYL), 143 to 163 (VFVY…ITGW), 174 to 194 (GDII…CVYF), 224 to 244 (LFLA…ISTI), 248 to 268 (WLWV…IAQF), and 279 to 299 (IHWD…VEVG).

The protein belongs to the UbiA prenyltransferase family. Requires Mg(2+) as cofactor.

It localises to the golgi apparatus membrane. It catalyses the reaction 5,7-dihydroxy-4-methylphthalide + (2E,6E)-farnesyl diphosphate = 4-farnesyl-3,5-dihydroxy-6-methylphthalide + diphosphate. The protein operates within secondary metabolite biosynthesis; terpenoid biosynthesis. Polyprenyl transferase; part of the gene cluster that mediates the biosynthesis of mycophenolic acid (MPA), the first isolated antibiotic natural product in the world obtained from a culture of Penicillium brevicompactum in 1893. MpaA is a Golgi apparatus-associated enzyme that catalyzes the prenylation of 5,7-dihydroxy-4,6-dimethylphthalide (DHMP) to yield farnesyl-DHMP (FDHMP). The first step of the pathway is the synthesis of 5-methylorsellinic acid (5MOA) by the cytosolic polyketide synthase mpaC. 5MOA is then converted to the phthalide compound 5,7-dihydroxy-4,6-dimethylphthalide (DHMP) by the endoplasmic reticulum-bound cytochrome P450 monooxygenase mpaDE. MpaDE first catalyzes hydroxylation of 5-MOA to 4,6-dihydroxy-2-(hydroxymethyl)-3-methylbenzoic acid (DHMB). MpaDE then acts as a lactone synthase that catalyzes the ring closure to convert DHMB into DHMP. The next step is the prenylation of DHMP by the Golgi apparatus-associated prenyltransferase mpaA to yield farnesyl-DHMP (FDHMP). The ER-bound oxygenase mpaB then mediates the oxidative cleavage the C19-C20 double bond in FDHMP to yield FDHMP-3C via a mycophenolic aldehyde intermediate. The O-methyltransferase mpaG catalyzes the methylation of FDHMP-3C to yield MFDHMP-3C. After the cytosolic methylation of FDHMP-3C, MFDHMP-3C enters into peroxisomes probably via free diffusion due to its low molecular weight. Upon a peroxisomal CoA ligation reaction, catalyzed by a beta-oxidation component enzyme acyl-CoA ligase ACL891, MFDHMP-3C-CoA would then be restricted to peroxisomes for the following beta-oxidation pathway steps. The peroxisomal beta-oxidation machinery than converts MFDHMP-3C-CoA into MPA_CoA, via a beta-oxidation chain-shortening process. Finally mpaH acts as a peroxisomal acyl-CoA hydrolase with high substrate specificity toward MPA-CoA to release the final product MPA. This Penicillium brevicompactum protein is Polyprenyl transferase mpaA.